We begin with the raw amino-acid sequence, 118 residues long: Small ribosomal subunit protein uS13 (118 aa).

Residues 94–118 (SLPLRGQRTKTNARTRKGPRKPIKK) form a disordered region.

It belongs to the universal ribosomal protein uS13 family. In terms of assembly, part of the 30S ribosomal subunit. Forms a loose heterodimer with protein S19. Forms two bridges to the 50S subunit in the 70S ribosome.

Its function is as follows. Located at the top of the head of the 30S subunit, it contacts several helices of the 16S rRNA. In the 70S ribosome it contacts the 23S rRNA (bridge B1a) and protein L5 of the 50S subunit (bridge B1b), connecting the 2 subunits; these bridges are implicated in subunit movement. Contacts the tRNAs in the A and P-sites. The sequence is that of Small ribosomal subunit protein uS13 from Shewanella oneidensis (strain ATCC 700550 / JCM 31522 / CIP 106686 / LMG 19005 / NCIMB 14063 / MR-1).